The chain runs to 217 residues: NADPH-dependent 3-demethoxyubiquinone 3-hydroxylase, mitochondrial (217 aa).

A mitochondrion-targeting transit peptide spans methionine 1–phenylalanine 23. Tandem repeats lie at residues alanine 48–leucine 129 and glycine 130–phenylalanine 217. The 2 X approximate tandem repeats stretch occupies residues alanine 48–phenylalanine 217. Arginine 51 provides a ligand contact to NADH. Residues glutamate 60, glutamate 90, histidine 93, glutamate 142, glutamate 178, and histidine 181 each contribute to the Fe cation site. NADH contacts are provided by tyrosine 212 and arginine 216.

Belongs to the COQ7 family. In terms of assembly, component of a multi-subunit COQ enzyme complex. Interacts with COQ8B and COQ6. Interacts with COQ9. Fe cation serves as cofactor. As to expression, highly expressed in tissues with high energy demand such as heart, muscle, liver, and kidney.

Its subcellular location is the mitochondrion inner membrane. The catalysed reaction is a 5-methoxy-2-methyl-3-(all-trans-polyprenyl)benzoquinone + NADH + O2 = a 3-demethylubiquinone + NAD(+) + H2O. It functions in the pathway cofactor biosynthesis; ubiquinone biosynthesis. Catalyzes the hydroxylation of the 5-methoxy-2-methyl-3-(all-trans-polyprenyl)benzoquinone at the C6 position and participates in the biosynthesis of ubiquinone. Catalyzes the reaction through a substrate-mediated reduction pathway, whereby NADH shuttles electrons to 5-methoxy-2-methyl-3-(all-trans-decaprenyl)benzoquinone, which then transfers the electrons to the two Fe(3+) centers. The binding of 5-methoxy-2-methyl-3-(all-trans-polyprenyl)benzoquinone (DMQn) mediates reduction of the diiron center by nicotinamide adenine dinucleotide (NADH) and initiates oxygen activation for subsequent DMQ hydroxylation. The physiological substrates are 5-methoxy-2-methyl-3-(all-trans-nonaprenyl)benzoquinone (DMQ(9)) and 5-methoxy-2-methyl-3-(all-trans-decaprenyl)benzoquinone (DMQ(10)), however in vitro the enzyme does not have any specificity concerning the length of the polyprenyl tail, and accepts tails of various lengths with similar efficiency. Also has a structural role in the COQ enzyme complex, stabilizing other COQ polypeptides. Involved in lifespan determination in a ubiquinone-independent manner. Plays a role in modulating mitochondrial stress responses, acting in the nucleus, perhaps via regulating gene expression, independent of its characterized mitochondrial function in ubiquinone biosynthesis. The protein is NADPH-dependent 3-demethoxyubiquinone 3-hydroxylase, mitochondrial of Mus musculus (Mouse).